The sequence spans 250 residues: 3-deoxy-manno-octulosonate cytidylyltransferase (250 aa).

The protein belongs to the KdsB family.

Its subcellular location is the cytoplasm. It catalyses the reaction 3-deoxy-alpha-D-manno-oct-2-ulosonate + CTP = CMP-3-deoxy-beta-D-manno-octulosonate + diphosphate. The protein operates within nucleotide-sugar biosynthesis; CMP-3-deoxy-D-manno-octulosonate biosynthesis; CMP-3-deoxy-D-manno-octulosonate from 3-deoxy-D-manno-octulosonate and CTP: step 1/1. Its pathway is bacterial outer membrane biogenesis; lipopolysaccharide biosynthesis. Its function is as follows. Activates KDO (a required 8-carbon sugar) for incorporation into bacterial lipopolysaccharide in Gram-negative bacteria. This chain is 3-deoxy-manno-octulosonate cytidylyltransferase, found in Azorhizobium caulinodans (strain ATCC 43989 / DSM 5975 / JCM 20966 / LMG 6465 / NBRC 14845 / NCIMB 13405 / ORS 571).